The sequence spans 302 residues: Sulfate adenylyltransferase subunit 2 (302 aa).

This sequence belongs to the PAPS reductase family. CysD subfamily. In terms of assembly, heterodimer composed of CysD, the smaller subunit, and CysN.

The enzyme catalyses sulfate + ATP + H(+) = adenosine 5'-phosphosulfate + diphosphate. It functions in the pathway sulfur metabolism; hydrogen sulfide biosynthesis; sulfite from sulfate: step 1/3. Its function is as follows. With CysN forms the ATP sulfurylase (ATPS) that catalyzes the adenylation of sulfate producing adenosine 5'-phosphosulfate (APS) and diphosphate, the first enzymatic step in sulfur assimilation pathway. APS synthesis involves the formation of a high-energy phosphoric-sulfuric acid anhydride bond driven by GTP hydrolysis by CysN coupled to ATP hydrolysis by CysD. This chain is Sulfate adenylyltransferase subunit 2, found in Salmonella schwarzengrund (strain CVM19633).